A 354-amino-acid polypeptide reads, in one-letter code: Peroxisomal membrane protein PEX32 (354 aa).

Helical transmembrane passes span 24–44 (LLNM…VIFL), 63–83 (FIAI…ACTV), 84–104 (LPTI…TTID), 151–171 (GFSL…IFTV), and 173–193 (SFLL…SVAT). N-linked (GlcNAc...) asparagine glycosylation occurs at N319.

This sequence belongs to the PEX28-32 family. PEX30/31 subfamily.

It is found in the peroxisome membrane. The protein localises to the endoplasmic reticulum membrane. With PEX24, contributes to tethering of peroxisomes to the endoplasmic reticulum for organelle biogenesis, positioning and segregation. The chain is Peroxisomal membrane protein PEX32 from Ogataea parapolymorpha (strain ATCC 26012 / BCRC 20466 / JCM 22074 / NRRL Y-7560 / DL-1) (Yeast).